The chain runs to 1305 residues: Contactin-associated protein-like 5 (1305 aa).

The first 22 residues, 1 to 22 (MDSPALGAVALLLAGFWHLGLT), serve as a signal peptide directing secretion. One can recognise an F5/8 type C domain in the interval 23–174 (ATNYNCDGAL…IGLRVEVFGC (152 aa)). The Extracellular segment spans residues 23-1236 (ATNYNCDGAL…PLTNAVRSDS (1214 aa)). 2 consecutive Laminin G-like domains span residues 180–360 (IADF…TFSC) and 367–544 (PITF…IDLC). Disulfide bonds link C329-C360, C512-C544, C550-C561, C555-C570, and C572-C582. Residues 546 to 583 (IKDRCLPNYCEHGGKCSQSWTTFYCDCNDTSYMGATCH) form the EGF-like 1 domain. Residues 584-790 (NSIYEQSCEA…LHCYGDRQFW (207 aa)) enclose the Fibrinogen C-terminal domain. A Laminin G-like 3 domain is found at 791–956 (NAASFNTEAS…KMTPGVKPGC (166 aa)). 5 disulfide bridges follow: C929/C956, C960/C973, C967/C982, C984/C994, and C1163/C1198. Residues 957 to 995 (PGHCSSYGNLCHNGGKCVEKYNGYSCDCTSSAYEGPFCK) enclose the EGF-like 2 domain. The region spanning 1017 to 1198 (PVTKNASTSS…VKGSLTESSC (182 aa)) is the Laminin G-like 4 domain. A helical membrane pass occupies residues 1237-1257 (AVIGGVIAVVIFIIFCIIAIM). At 1258-1305 (SRFLYQHKQAHRSSQTKEKEYPENLESSFKADIDLQNTVSECKREYFI) the chain is on the cytoplasmic side.

It belongs to the neurexin family. As to expression, expressed in brain.

The protein localises to the membrane. May play a role in the correct development and proper functioning of the peripheral and central nervous system and be involved in cell adhesion and intercellular communication. The protein is Contactin-associated protein-like 5 (CNTNAP5) of Gallus gallus (Chicken).